A 228-amino-acid chain; its full sequence is Cytochrome c oxidase subunit 2 (228 aa).

Topologically, residues 1–14 are mitochondrial intermembrane; it reads MPHASQLSLQEAMG. The helical transmembrane segment at 15-45 threads the bilayer; sequence PTMEEVIFLHDHVLLLTCLMTMVITMFTLTA. Topologically, residues 46–59 are mitochondrial matrix; it reads TTTALTHNDPTEEV. A helical transmembrane segment spans residues 60–87; sequence EQLEAAWTVAPIMILILTALPSVRSLYL. Residues 88-228 are Mitochondrial intermembrane-facing; that stretch reads MEEVFNPYLT…HFEQWLISEQ (141 aa). Residues H162, C197, E199, C201, H205, and M208 each coordinate Cu cation. E199 lines the Mg(2+) pocket.

This sequence belongs to the cytochrome c oxidase subunit 2 family. As to quaternary structure, component of the cytochrome c oxidase (complex IV, CIV), a multisubunit enzyme composed of 14 subunits. The complex is composed of a catalytic core of 3 subunits MT-CO1, MT-CO2 and MT-CO3, encoded in the mitochondrial DNA, and 11 supernumerary subunits COX4I, COX5A, COX5B, COX6A, COX6B, COX6C, COX7A, COX7B, COX7C, COX8 and NDUFA4, which are encoded in the nuclear genome. The complex exists as a monomer or a dimer and forms supercomplexes (SCs) in the inner mitochondrial membrane with NADH-ubiquinone oxidoreductase (complex I, CI) and ubiquinol-cytochrome c oxidoreductase (cytochrome b-c1 complex, complex III, CIII), resulting in different assemblies (supercomplex SCI(1)III(2)IV(1) and megacomplex MCI(2)III(2)IV(2)). Found in a complex with TMEM177, COA6, COX18, COX20, SCO1 and SCO2. Interacts with TMEM177 in a COX20-dependent manner. Interacts with COX20. Interacts with COX16. The cofactor is Cu cation.

Its subcellular location is the mitochondrion inner membrane. It catalyses the reaction 4 Fe(II)-[cytochrome c] + O2 + 8 H(+)(in) = 4 Fe(III)-[cytochrome c] + 2 H2O + 4 H(+)(out). In terms of biological role, component of the cytochrome c oxidase, the last enzyme in the mitochondrial electron transport chain which drives oxidative phosphorylation. The respiratory chain contains 3 multisubunit complexes succinate dehydrogenase (complex II, CII), ubiquinol-cytochrome c oxidoreductase (cytochrome b-c1 complex, complex III, CIII) and cytochrome c oxidase (complex IV, CIV), that cooperate to transfer electrons derived from NADH and succinate to molecular oxygen, creating an electrochemical gradient over the inner membrane that drives transmembrane transport and the ATP synthase. Cytochrome c oxidase is the component of the respiratory chain that catalyzes the reduction of oxygen to water. Electrons originating from reduced cytochrome c in the intermembrane space (IMS) are transferred via the dinuclear copper A center (CU(A)) of subunit 2 and heme A of subunit 1 to the active site in subunit 1, a binuclear center (BNC) formed by heme A3 and copper B (CU(B)). The BNC reduces molecular oxygen to 2 water molecules using 4 electrons from cytochrome c in the IMS and 4 protons from the mitochondrial matrix. This Lycodon semicarinatus (Ryukyu odd-tooth snake) protein is Cytochrome c oxidase subunit 2 (MT-CO2).